A 1199-amino-acid polypeptide reads, in one-letter code: DNA-directed RNA polymerase subunit beta (1199 aa).

The interval 1177–1199 is disordered; that stretch reads EQEEKKAKEAEQETAEKEETKTE.

It belongs to the RNA polymerase beta chain family. The RNAP catalytic core consists of 2 alpha, 1 beta, 1 beta' and 1 omega subunit. When a sigma factor is associated with the core the holoenzyme is formed, which can initiate transcription.

The enzyme catalyses RNA(n) + a ribonucleoside 5'-triphosphate = RNA(n+1) + diphosphate. Its function is as follows. DNA-dependent RNA polymerase catalyzes the transcription of DNA into RNA using the four ribonucleoside triphosphates as substrates. The polypeptide is DNA-directed RNA polymerase subunit beta (Ligilactobacillus salivarius (strain UCC118) (Lactobacillus salivarius)).